The primary structure comprises 472 residues: 3beta,22alpha-dihydroxysteroid 3-dehydrogenase (472 aa).

A helical membrane pass occupies residues 1–21 (MAFTAFLLLLSSIAAGFLLLL). A heme-binding site is contributed by Cys418.

Belongs to the cytochrome P450 family. It depends on heme as a cofactor.

It localises to the membrane. The catalysed reaction is (22S)-22-hydroxycampesterol + reduced [NADPH--hemoprotein reductase] + O2 = (22S)-22-hydroxycampest-4-en-3-one + oxidized [NADPH--hemoprotein reductase] + 2 H2O + H(+). It carries out the reaction 6-deoxoteasterone + reduced [NADPH--hemoprotein reductase] + O2 = 3-dehydro-6-deoxoteasterone + oxidized [NADPH--hemoprotein reductase] + 2 H2O + H(+). The enzyme catalyses 6-deoxycathasterone + reduced [NADPH--hemoprotein reductase] + O2 = (22S,24R)-22-hydroxy-5alpha-ergostan-3-one + oxidized [NADPH--hemoprotein reductase] + 2 H2O + H(+). It catalyses the reaction (22R,23R)-22,23-dihydroxycampesterol + reduced [NADPH--hemoprotein reductase] + O2 = (22R,23R)-22,23-dihydroxycampest-4-en-3-one + oxidized [NADPH--hemoprotein reductase] + 2 H2O + H(+). The protein operates within plant hormone biosynthesis; brassinosteroid biosynthesis. Catalyzes C3-oxidation steps in brassinosteroids biosynthesis. Converts (22S)-22-hydroxycampesterol (22-OHCR) to (22S,24R)-22-hydroxyergost-4-en-3-one (22-hydroxy-campesta-4-en-3-one, 22-OH-4-en-3-one), 6-deoxocathasterone (6-deoxoCT) to (22S,24R)-22-hydroxy-5alpha-ergostan-3-one (22-hydroxy-campesta-3-one, 22-OH-3-one), (22R,23R)-22,23-dihydroxycampesterol (22,23-diOHCR) to (22R,23R)-22,23-dihydroxy-campest-4-en-3-one (22,23-diOH-4-en-3-one), and 6-deoxoteasterone (6-deoxoTE) to 3-dehydro-6-deoxoteasterone (6-deoxo3DT, 6-deoxo-3-DHT). The chain is 3beta,22alpha-dihydroxysteroid 3-dehydrogenase from Arabidopsis thaliana (Mouse-ear cress).